The following is a 520-amino-acid chain: GMP synthase [glutamine-hydrolyzing] (520 aa).

The Glutamine amidotransferase type-1 domain maps to 12 to 205; it reads KIIVLDYGSQ…AISICGARGD (194 aa). Residue Cys89 is the Nucleophile of the active site. Active-site residues include His179 and Glu181. Positions 206–395 constitute a GMPS ATP-PPase domain; that stretch reads WSMDNFIDME…LGMPEEIVWR (190 aa). 233–239 is an ATP binding site; it reads SGGVDSS.

As to quaternary structure, homodimer.

The enzyme catalyses XMP + L-glutamine + ATP + H2O = GMP + L-glutamate + AMP + diphosphate + 2 H(+). The protein operates within purine metabolism; GMP biosynthesis; GMP from XMP (L-Gln route): step 1/1. In terms of biological role, catalyzes the synthesis of GMP from XMP. This is GMP synthase [glutamine-hydrolyzing] from Streptococcus pyogenes serotype M6 (strain ATCC BAA-946 / MGAS10394).